The primary structure comprises 118 residues: UPF0295 protein BT9727_0449 (118 aa).

The next 2 helical transmembrane spans lie at 12-32 (IRTFALSLVFIGLFIAYLGVF) and 43-63 (FMMVGFLAVIASTVVYFWIGM).

Belongs to the UPF0295 family.

It is found in the cell membrane. The sequence is that of UPF0295 protein BT9727_0449 from Bacillus thuringiensis subsp. konkukian (strain 97-27).